Reading from the N-terminus, the 621-residue chain is Glutathione-regulated potassium-efflux system protein KefC (621 aa).

A run of 12 helical transmembrane segments spans residues 4–24, 26–46, 54–74, 90–110, 114–134, 149–169, 178–198, 218–238, 270–290, 294–314, 326–346, and 359–379; these read HTLIQALIYLGAAALIVPIAV, LGLGSVLGYLIAGCIIGPWGL, AILHFAEIGVVLMLFVIGLEL, GALQMVACGVLIGLFCMLLGL, VAELIGMTLALSSTAIAMQAM, FAVLLFQDIAAIPLVAMIPLL, LVAFALSALKVAAALALVVAL, VFSAVALFLVFGFGLLLEEVG, GLLLGLFFIGVGMSIDFGTLV, LRIVILLVGFLAIKMLMLWLI, RWFAVLLGQGSEFAFVVFGAA, and ALTLAVALSMAATPVLLVLLT. The RCK N-terminal domain maps to 399 to 518; that stretch reads QPRVIVAGFG…AGVEAPERET (120 aa). Residues 598-621 are disordered; the sequence is GWQGTEEGRHTGDIADEPENKPSA.

Belongs to the monovalent cation:proton antiporter 2 (CPA2) transporter (TC 2.A.37) family. KefC subfamily. Homodimer. Interacts with the regulatory subunit KefF.

It localises to the cell inner membrane. In terms of biological role, pore-forming subunit of a potassium efflux system that confers protection against electrophiles. Catalyzes K(+)/H(+) antiport. In Klebsiella pneumoniae (strain 342), this protein is Glutathione-regulated potassium-efflux system protein KefC.